Here is a 430-residue protein sequence, read N- to C-terminus: Hydrogenobyrinate a,c-diamide synthase (430 aa).

Residues 239–422 (RIGVARDAAF…IHFYLPSDPL (184 aa)) form the GATase cobBQ-type domain. Cysteine 321 serves as the catalytic Nucleophile.

Belongs to the CobB/CbiA family. It depends on Mg(2+) as a cofactor.

It catalyses the reaction hydrogenobyrinate + 2 L-glutamine + 2 ATP + 2 H2O = hydrogenobyrinate a,c-diamide + 2 L-glutamate + 2 ADP + 2 phosphate + 2 H(+). It participates in cofactor biosynthesis; adenosylcobalamin biosynthesis; cob(II)yrinate a,c-diamide from precorrin-2 (aerobic route): step 9/10. Catalyzes the ATP-dependent amidation of the two carboxylate groups at positions a and c of hydrogenobyrinate, using either L-glutamine or ammonia as the nitrogen source. In Stutzerimonas stutzeri (strain A1501) (Pseudomonas stutzeri), this protein is Hydrogenobyrinate a,c-diamide synthase.